Reading from the N-terminus, the 402-residue chain is MNATDIERCRKRIIQYIWDPEPKNDEEPGSPIWCLGTRYPPQCVEETADESRNPDHGQQQNTNTSAPGWPEAFLLDFESKIWMTYRSNFPPIPKDAGQEGSLSLTLGVRLRSQLIDAQGFTSDTGWGCMIRSGQSLLANSMAILLLGRDWRRGERLEEEGKLLSLFADSPHAPFSIHSFVKHGADFCGKHPGEWFGPTATARCIQGLAARYDQSNLQVYIADDNSDVHQDKFMSVSRDEKGTVRPTLILLGLRLGIDRITAVYWNGLKAVLQLPQSVGIAGGRPSASHYFVAVQGSHFFYLDPHNTRPALRYSESGTYTEDEVNTYHTRRLRRLNIQDMDPSMLIGFLIRDEDDWEDWKARIMSLEGKPIITILSESDAASWKGRREALDEVEAFDDLDVAL.

Residues 46–68 form a disordered region; that stretch reads ETADESRNPDHGQQQNTNTSAPG. The segment covering 56–66 has biased composition (polar residues); sequence HGQQQNTNTSA. Residue C128 is the Nucleophile of the active site. Catalysis depends on residues D302 and H304.

It belongs to the peptidase C54 family.

The protein resides in the cytoplasm. Its subcellular location is the nucleus. The protein localises to the preautophagosomal structure. The enzyme catalyses [protein]-C-terminal L-amino acid-glycyl-phosphatidylethanolamide + H2O = [protein]-C-terminal L-amino acid-glycine + a 1,2-diacyl-sn-glycero-3-phosphoethanolamine. Its function is as follows. Cysteine protease that plays a key role in cytoplasm to vacuole transport (Cvt) and autophagy by mediating both proteolytic activation and delipidation of ATG8. Required for selective autophagic degradation of the nucleus (nucleophagy) as well as for mitophagy which contributes to regulate mitochondrial quantity and quality by eliminating the mitochondria to a basal level to fulfill cellular energy requirements and preventing excess ROS production. The protease activity is required for proteolytic activation of ATG8: cleaves the C-terminal amino acid of ATG8 to reveal a C-terminal glycine. ATG8 ubiquitin-like activity requires the exposure of the glycine at the C-terminus for its conjugation to phosphatidylethanolamine (PE) and its insertion to membranes, which is necessary for autophagy. The ATG8-PE conjugate mediates tethering between adjacent membranes and stimulates membrane hemifusion, leading to expansion of the autophagosomal membrane during autophagy. In addition to the protease activity, also catalyzes deconjugation of PE-conjugated forms of ATG8 during macroautophagy: ATG8 delipidation is required to release the protein from membranes, which facilitates multiple events during macroautophagy, and especially for efficient autophagosome biogenesis, the assembly of ATG9-containing tubulovesicular clusters into phagophores/autophagosomes, and for the disassembly of PAS-associated ATG components. ATG8 delipidation by ATG4 also recycles ATG8-PE generated on inappropriate membranes to maintain a reservoir of unlipidated ATG8 that is required for autophagosome formation at the PAS. In Emericella nidulans (strain FGSC A4 / ATCC 38163 / CBS 112.46 / NRRL 194 / M139) (Aspergillus nidulans), this protein is Cysteine protease atg4 (atg4).